The primary structure comprises 358 residues: Putative cell-type specific agglutination protein pfl7 (358 aa).

The first 23 residues, 1-23 (MNSLKSLCLKCIVTLCLLVNAFA), serve as a signal peptide directing secretion. Residues asparagine 67, asparagine 88, asparagine 112, and asparagine 136 are each glycosylated (N-linked (GlcNAc...) asparagine). The tract at residues 90–144 (TISTSSSTPITASVPTSSSILSNSTIPTTSPVPTTSSTPTSSSILSNSTIPSSSS) is disordered. 2 consecutive repeat copies span residues 148 to 180 (STITTTIISGSTQFTTTFVDQSIDTVEVVIPTA) and 181 to 218 (GYITTTLTSGSSYPVSTTTLQTVSGTQSGLVEVITPSC). Residues 148–218 (STITTTIISG…GLVEVITPSC (71 aa)) are 2 X 36 AA approximate tandem repeats. In terms of domain architecture, DIPSY spans 207–358 (QSGLVEVITP…RADDVILVAY (152 aa)). Asparagine 245 and asparagine 305 each carry an N-linked (GlcNAc...) asparagine glycan.

Belongs to the mam3/map4 family.

Its subcellular location is the cell surface. Its function is as follows. May be involved in agglutination during conjugation or other aspects of colony formation. Induces flocculation when overexpressed. The sequence is that of Putative cell-type specific agglutination protein pfl7 from Schizosaccharomyces pombe (strain 972 / ATCC 24843) (Fission yeast).